The chain runs to 411 residues: LL-diaminopimelate aminotransferase (411 aa).

Positions 15 and 42 each coordinate substrate. Pyridoxal 5'-phosphate contacts are provided by residues Y72, 108–109 (SK), Y132, N187, Y218, and 246–248 (SFS). K109, Y132, and N187 together coordinate substrate. K249 bears the N6-(pyridoxal phosphate)lysine mark. Positions 257 and 292 each coordinate pyridoxal 5'-phosphate. Positions 292 and 388 each coordinate substrate.

The protein belongs to the class-I pyridoxal-phosphate-dependent aminotransferase family. LL-diaminopimelate aminotransferase subfamily. As to quaternary structure, homodimer. Requires pyridoxal 5'-phosphate as cofactor.

The enzyme catalyses (2S,6S)-2,6-diaminopimelate + 2-oxoglutarate = (S)-2,3,4,5-tetrahydrodipicolinate + L-glutamate + H2O + H(+). It participates in amino-acid biosynthesis; L-lysine biosynthesis via DAP pathway; LL-2,6-diaminopimelate from (S)-tetrahydrodipicolinate (aminotransferase route): step 1/1. In terms of biological role, involved in the synthesis of meso-diaminopimelate (m-DAP or DL-DAP), required for both lysine and peptidoglycan biosynthesis. Catalyzes the direct conversion of tetrahydrodipicolinate to LL-diaminopimelate. The polypeptide is LL-diaminopimelate aminotransferase (Trichodesmium erythraeum (strain IMS101)).